We begin with the raw amino-acid sequence, 349 residues long: 5,10-methylenetetrahydromethanopterin reductase (349 aa).

This sequence belongs to the mer family. As to quaternary structure, homotetramer composed of two loosely associated dimers.

It localises to the cytoplasm. It catalyses the reaction 5-methyl-5,6,7,8-tetrahydromethanopterin + oxidized coenzyme F420-(gamma-L-Glu)(n) + H(+) = 5,10-methylenetetrahydromethanopterin + reduced coenzyme F420-(gamma-L-Glu)(n). It participates in one-carbon metabolism; methanogenesis from CO(2); methyl-coenzyme M from 5,10-methylene-5,6,7,8-tetrahydromethanopterin: step 1/2. With respect to regulation, requires the presence of relatively high concentrations of either sulfate or phosphate for maximal activity. Functionally, catalyzes the reversible reduction of methylene-H(4)MPT to methyl-H(4)MPT. The chain is 5,10-methylenetetrahydromethanopterin reductase from Methanopyrus kandleri (strain AV19 / DSM 6324 / JCM 9639 / NBRC 100938).